A 180-amino-acid polypeptide reads, in one-letter code: Large ribosomal subunit protein uL5c (180 aa).

It belongs to the universal ribosomal protein uL5 family. In terms of assembly, part of the 50S ribosomal subunit; contacts the 5S rRNA.

It is found in the plastid. The protein resides in the chloroplast. Binds 5S rRNA, forms part of the central protuberance of the 50S subunit. The sequence is that of Large ribosomal subunit protein uL5c (rpl5) from Tupiella akineta (Green alga).